The chain runs to 815 residues: Translation initiation factor IF-2 (815 aa).

Residues 315–482 (ARPPVVTIMG…AISLTAEVLE (168 aa)) enclose the tr-type G domain. The tract at residues 324-331 (GHVDHGKT) is G1. 324 to 331 (GHVDHGKT) serves as a coordination point for GTP. The interval 349 to 353 (GITQH) is G2. The G3 stretch occupies residues 370–373 (DTPG). Residues 370-374 (DTPGH) and 424-427 (NKID) contribute to the GTP site. A G4 region spans residues 424–427 (NKID). The G5 stretch occupies residues 460-462 (SAY).

It belongs to the TRAFAC class translation factor GTPase superfamily. Classic translation factor GTPase family. IF-2 subfamily.

The protein resides in the cytoplasm. Functionally, one of the essential components for the initiation of protein synthesis. Protects formylmethionyl-tRNA from spontaneous hydrolysis and promotes its binding to the 30S ribosomal subunits. Also involved in the hydrolysis of GTP during the formation of the 70S ribosomal complex. This is Translation initiation factor IF-2 from Ruthia magnifica subsp. Calyptogena magnifica.